The following is a 331-amino-acid chain: Phospho-N-acetylmuramoyl-pentapeptide-transferase (331 aa).

A run of 9 helical transmembrane segments spans residues 7–27 (IIYT…LTIP), 54–74 (TIGG…SGLI), 78–98 (LWIA…DDFI), 106–126 (LGLR…ILAI), 133–153 (IMGT…AGFT), 154–174 (ITQT…VVVA), 195–215 (IIAA…LAIF), 249–269 (AIAT…VGGI), and 311–331 (VVIV…LALS).

This sequence belongs to the glycosyltransferase 4 family. MraY subfamily. Mg(2+) is required as a cofactor.

It localises to the cell membrane. It catalyses the reaction UDP-N-acetyl-alpha-D-muramoyl-L-alanyl-gamma-D-glutamyl-meso-2,6-diaminopimeloyl-D-alanyl-D-alanine + di-trans,octa-cis-undecaprenyl phosphate = di-trans,octa-cis-undecaprenyl diphospho-N-acetyl-alpha-D-muramoyl-L-alanyl-D-glutamyl-meso-2,6-diaminopimeloyl-D-alanyl-D-alanine + UMP. It participates in cell wall biogenesis; peptidoglycan biosynthesis. In terms of biological role, catalyzes the initial step of the lipid cycle reactions in the biosynthesis of the cell wall peptidoglycan: transfers peptidoglycan precursor phospho-MurNAc-pentapeptide from UDP-MurNAc-pentapeptide onto the lipid carrier undecaprenyl phosphate, yielding undecaprenyl-pyrophosphoryl-MurNAc-pentapeptide, known as lipid I. The polypeptide is Phospho-N-acetylmuramoyl-pentapeptide-transferase (Alkaliphilus metalliredigens (strain QYMF)).